Reading from the N-terminus, the 212-residue chain is Phosphatidylserine decarboxylase proenzyme (212 aa).

Serine 182 (schiff-base intermediate with substrate; via pyruvic acid) is an active-site residue. Serine 182 is modified (pyruvic acid (Ser); by autocatalysis).

The protein belongs to the phosphatidylserine decarboxylase family. PSD-A subfamily. Heterodimer of a large membrane-associated beta subunit and a small pyruvoyl-containing alpha subunit. Pyruvate is required as a cofactor. Is synthesized initially as an inactive proenzyme. Formation of the active enzyme involves a self-maturation process in which the active site pyruvoyl group is generated from an internal serine residue via an autocatalytic post-translational modification. Two non-identical subunits are generated from the proenzyme in this reaction, and the pyruvate is formed at the N-terminus of the alpha chain, which is derived from the carboxyl end of the proenzyme. The post-translation cleavage follows an unusual pathway, termed non-hydrolytic serinolysis, in which the side chain hydroxyl group of the serine supplies its oxygen atom to form the C-terminus of the beta chain, while the remainder of the serine residue undergoes an oxidative deamination to produce ammonia and the pyruvoyl prosthetic group on the alpha chain.

It localises to the cell membrane. It carries out the reaction a 1,2-diacyl-sn-glycero-3-phospho-L-serine + H(+) = a 1,2-diacyl-sn-glycero-3-phosphoethanolamine + CO2. It functions in the pathway phospholipid metabolism; phosphatidylethanolamine biosynthesis; phosphatidylethanolamine from CDP-diacylglycerol: step 2/2. Catalyzes the formation of phosphatidylethanolamine (PtdEtn) from phosphatidylserine (PtdSer). The protein is Phosphatidylserine decarboxylase proenzyme of Pelodictyon phaeoclathratiforme (strain DSM 5477 / BU-1).